The following is a 125-amino-acid chain: S-adenosylmethionine decarboxylase proenzyme (125 aa).

The active-site Schiff-base intermediate with substrate; via pyruvic acid is Ser-71. Ser-71 is subject to Pyruvic acid (Ser); by autocatalysis. The Proton acceptor; for processing activity role is filled by His-76. Cys-91 serves as the catalytic Proton donor; for catalytic activity.

This sequence belongs to the prokaryotic AdoMetDC family. Type 1 subfamily. In terms of assembly, heterotetramer of two alpha and two beta chains arranged as a dimer of alpha/beta heterodimers. Pyruvate is required as a cofactor. Is synthesized initially as an inactive proenzyme. Formation of the active enzyme involves a self-maturation process in which the active site pyruvoyl group is generated from an internal serine residue via an autocatalytic post-translational modification. Two non-identical subunits are generated from the proenzyme in this reaction, and the pyruvate is formed at the N-terminus of the alpha chain, which is derived from the carboxyl end of the proenzyme. The post-translation cleavage follows an unusual pathway, termed non-hydrolytic serinolysis, in which the side chain hydroxyl group of the serine supplies its oxygen atom to form the C-terminus of the beta chain, while the remainder of the serine residue undergoes an oxidative deamination to produce ammonia and the pyruvoyl group blocking the N-terminus of the alpha chain.

It catalyses the reaction S-adenosyl-L-methionine + H(+) = S-adenosyl 3-(methylsulfanyl)propylamine + CO2. The protein operates within amine and polyamine biosynthesis; S-adenosylmethioninamine biosynthesis; S-adenosylmethioninamine from S-adenosyl-L-methionine: step 1/1. Functionally, catalyzes the decarboxylation of S-adenosylmethionine to S-adenosylmethioninamine (dcAdoMet), the propylamine donor required for the synthesis of the polyamines spermine and spermidine from the diamine putrescine. The polypeptide is S-adenosylmethionine decarboxylase proenzyme (Pyrobaculum arsenaticum (strain DSM 13514 / JCM 11321 / PZ6)).